The sequence spans 263 residues: MRIALGVEYDGARFHGWQRQNEVISVQQHLEEALTRIANEPIRVVCAGRTDAGVHATGQVVHFETTSQRPDRAWTLGINTYLPDTISVRWVKAVPEDFHARFSATARRYRYIIYNNTLRSGILANGVTHIYGDLDHELMHEAAQKLVGKHDFSSFRAVNCQAKTATRTMSHIRVKRMGDYIVIDVQANAFLHHMVRNITGTLVAIGHKEKPVEWVDELLEVKDRTKAGITALPNGLYLVHVTYPETFALPKLKMGPLFLADDF.

Residue D51 is the Nucleophile of the active site. Residue Y109 coordinates substrate.

The protein belongs to the tRNA pseudouridine synthase TruA family. As to quaternary structure, homodimer.

It catalyses the reaction uridine(38/39/40) in tRNA = pseudouridine(38/39/40) in tRNA. In terms of biological role, formation of pseudouridine at positions 38, 39 and 40 in the anticodon stem and loop of transfer RNAs. This chain is tRNA pseudouridine synthase A, found in Pseudoalteromonas atlantica (strain T6c / ATCC BAA-1087).